The primary structure comprises 119 residues: Short coiled-coil protein A (119 aa).

Over residues 1–10 the composition is skewed to acidic residues; it reads MEGDVDEDDG. Residues 1-26 are disordered; the sequence is MEGDVDEDDGTFTNISLADDSADGEP. Residues 48–95 are a coiled coil; the sequence is MENQVEQEEKTRLINQVLELQHTLEDLSARVDAVKEENLKLKSENQVL.

The protein belongs to the SCOC family.

It is found in the golgi apparatus membrane. Its subcellular location is the golgi apparatus. The protein resides in the trans-Golgi network. It localises to the cytoplasm. The protein localises to the cytosol. Positive regulator of amino acid starvation-induced autophagy. The polypeptide is Short coiled-coil protein A (scoca) (Danio rerio (Zebrafish)).